The following is a 946-amino-acid chain: DDB1- and CUL4-associated factor 5 (946 aa).

6 WD repeats span residues 51–91 (GHFG…HSRV), 99–139 (EHHS…LDVF), 140–180 (AHED…HGEP), 185–225 (NYPS…SSLL), 277–317 (FNSC…EAGG), and 331–370 (GHRS…GCTG). Residues 449-478 (GVSERSGYTDSESSASLPRSPPPTVDESAD) form a disordered region. Residues 454-465 (SGYTDSESSASL) show a composition bias toward polar residues. Threonine 500 carries the post-translational modification Phosphothreonine. Disordered regions lie at residues 527–656 (LSNE…MESV), 675–860 (SNNK…ELET), and 894–946 (CETP…KLKT). Phosphoserine occurs at positions 531 and 533. The span at 531–544 (SDSEENVCEAELDT) shows a compositional bias: acidic residues. Low complexity predominate over residues 555-567 (PEDGSSSPSSSTS). Residues 579–592 (ATTRQRNAMRRRQK) are compositionally biased toward basic residues. The span at 625 to 638 (LSPSPDSSPERSAS) shows a compositional bias: low complexity. Residues serine 626, serine 628, and serine 645 each carry the phosphoserine modification. Residues 691-701 (EGRAGTSHKDN) are compositionally biased toward basic and acidic residues. Composition is skewed to polar residues over residues 760–769 (GTSQDTNNSG) and 808–819 (TLNSASGNCPRT).

As to quaternary structure, interacts with DDB1, CUL4A or CUL4B. Interacts with L3MBTL3. Interacts with SOX2. Interacts with DNMT1. Interacts with E2F1.

The protein operates within protein modification; protein ubiquitination. In terms of biological role, is a substrate receptor for the CUL4-DDB1 E3 ubiquitin-protein ligase complex (CRL4), involved in the ubiquitination of a set of methylated non-histone proteins, including SOX2. The complex CRL4-DCAF5 is also involved in the ubiquitination of methylated DNMT1 and E2F1. This Mus musculus (Mouse) protein is DDB1- and CUL4-associated factor 5 (Dcaf5).